Here is a 551-residue protein sequence, read N- to C-terminus: Arginine--tRNA ligase (551 aa).

The 'HIGH' region motif lies at 123-133 (ANPTGPLTIGR).

This sequence belongs to the class-I aminoacyl-tRNA synthetase family. As to quaternary structure, monomer.

The protein localises to the cytoplasm. It carries out the reaction tRNA(Arg) + L-arginine + ATP = L-arginyl-tRNA(Arg) + AMP + diphosphate. The sequence is that of Arginine--tRNA ligase from Chlorobium limicola (strain DSM 245 / NBRC 103803 / 6330).